Reading from the N-terminus, the 420-residue chain is UDP-N-acetylglucosamine 1-carboxyvinyltransferase (420 aa).

22–23 contacts phosphoenolpyruvate; it reads KN. Arg94 contacts UDP-N-acetyl-alpha-D-glucosamine. The active-site Proton donor is Cys118. Position 118 is a 2-(S-cysteinyl)pyruvic acid O-phosphothioketal (Cys118). Positions 306 and 328 each coordinate UDP-N-acetyl-alpha-D-glucosamine.

Belongs to the EPSP synthase family. MurA subfamily.

It is found in the cytoplasm. It carries out the reaction phosphoenolpyruvate + UDP-N-acetyl-alpha-D-glucosamine = UDP-N-acetyl-3-O-(1-carboxyvinyl)-alpha-D-glucosamine + phosphate. Its pathway is cell wall biogenesis; peptidoglycan biosynthesis. Functionally, cell wall formation. Adds enolpyruvyl to UDP-N-acetylglucosamine. The sequence is that of UDP-N-acetylglucosamine 1-carboxyvinyltransferase from Jannaschia sp. (strain CCS1).